The primary structure comprises 459 residues: Cyclin-dependent kinase F-4 (459 aa).

Residues Phe4–Phe283 form the Protein kinase domain. ATP contacts are provided by residues Val10–Val18 and Lys33. Residue Asp125 is the Proton acceptor of the active site. Ser151 carries the phosphoserine modification. Thr156 is subject to Phosphothreonine. Positions Lys310–Gly397 are disordered. Polar residues-rich tracts occupy residues Ser322–Gly346 and Glu366–Arg375.

This sequence belongs to the protein kinase superfamily. CMGC Ser/Thr protein kinase family. CDC2/CDKX subfamily.

It catalyses the reaction L-seryl-[protein] + ATP = O-phospho-L-seryl-[protein] + ADP + H(+). The catalysed reaction is L-threonyl-[protein] + ATP = O-phospho-L-threonyl-[protein] + ADP + H(+). The enzyme catalyses [DNA-directed RNA polymerase] + ATP = phospho-[DNA-directed RNA polymerase] + ADP + H(+). The protein is Cyclin-dependent kinase F-4 (CDKF-4) of Oryza sativa subsp. japonica (Rice).